Here is a 549-residue protein sequence, read N- to C-terminus: Glucose-6-phosphate isomerase (549 aa).

Residue E354 is the Proton donor of the active site. Residues H385 and K513 contribute to the active site.

It belongs to the GPI family.

It localises to the cytoplasm. It catalyses the reaction alpha-D-glucose 6-phosphate = beta-D-fructose 6-phosphate. It functions in the pathway carbohydrate biosynthesis; gluconeogenesis. The protein operates within carbohydrate degradation; glycolysis; D-glyceraldehyde 3-phosphate and glycerone phosphate from D-glucose: step 2/4. Catalyzes the reversible isomerization of glucose-6-phosphate to fructose-6-phosphate. This Nitrosococcus oceani (strain ATCC 19707 / BCRC 17464 / JCM 30415 / NCIMB 11848 / C-107) protein is Glucose-6-phosphate isomerase.